The sequence spans 699 residues: MNLWTDDNASMMEAFMASADLPAFPWGAASTPPPPPPPPHHHHQQQQQQVLPPPAAAPAAAAFNQDTLQQRLQSIIEGSRETWTYAIFWQSSIDVSTGASLLGWGDGYYKGCDDDKRKQRSSTPAAAAEQEHRKRVLRELNSLIAGAGAAPDEAVEEEVTDTEWFFLVSMTQSFPNGLGLPGQALFAAQPTWIATGLSSAPCDRARQAYTFGLRTMVCLPLATGVLELGSTDVIFQTGDSIPRIRALFNLSAAAASSWPPHPDAASADPSVLWLADAPPMDMKDSISAADISVSKPPPPPPHQIQHFENGSTSTLTENPSPSVHAPTPSQPAAPPQRQQQQQQSSQAQQGPFRRELNFSDFASNGGAAAPPFFKPETGEILNFGNDSSSGRRNPSPAPPAATASLTTAPGSLFSQHTPTLTAAANDAKSNNQKRSMEATSRASNTNNHPAATANEGMLSFSSAPTTRPSTGTGAPAKSESDHSDLEASVREVESSRVVAPPPEAEKRPRKRGRKPANGREEPLNHVEAERQRREKLNQRFYALRAVVPNVSKMDKASLLGDAISYINELRGKLTALETDKETLQSQMESLKKERDARPPAPSGGGGDGGARCHAVEIEAKILGLEAMIRVQCHKRNHPAARLMTALRELDLDVYHASVSVVKDLMIQQVAVKMASRVYSQDQLNAALYTRIAEPGTAAR.

The tract at residues 25 to 60 (PWGAASTPPPPPPPPHHHHQQQQQQVLPPPAAAPAA) is disordered. A JAZ-interaction domain region spans residues 93–158 (IDVSTGASLL…AAPDEAVEEE (66 aa)). A disordered region spans residues 290–530 (DISVSKPPPP…EPLNHVEAER (241 aa)). The segment covering 306–321 (HFENGSTSTLTENPSP) has biased composition (polar residues). 2 stretches are compositionally biased toward low complexity: residues 335–349 (PQRQ…QAQQ) and 387–412 (SSSG…PGSL). Polar residues-rich tracts occupy residues 413–449 (FSQH…NNHP) and 459–472 (SFSS…STGT). A compositionally biased stretch (basic and acidic residues) spans 478 to 494 (SESDHSDLEASVREVES). Positions 506 to 514 (KRPRKRGRK) match the Nuclear localization signal motif. Residues 507–516 (RPRKRGRKPA) are compositionally biased toward basic residues. Residues 517 to 530 (NGREEPLNHVEAER) are compositionally biased toward basic and acidic residues. The segment at 520-533 (EEPLNHVEAERQRR) is basic motif; degenerate. Positions 520-569 (EEPLNHVEAERQRREKLNQRFYALRAVVPNVSKMDKASLLGDAISYINEL) constitute a bHLH domain. A helix-loop-helix motif region spans residues 534 to 569 (EKLNQRFYALRAVVPNVSKMDKASLLGDAISYINEL). Positions 582-611 (TLQSQMESLKKERDARPPAPSGGGGDGGAR) are disordered.

This sequence belongs to the bHLH protein family. In terms of assembly, interacts with TIFY3/JAZ1. In terms of tissue distribution, highly expressed in spikelets and floral organs.

It is found in the nucleus. Functionally, transcriptional activator involved in jasmonate (JA) signaling pathway during spikelet development. Binds to the G2 region G-box (5'-CACGTG-3') of the MADS1 promoter and thus directly regulates the expression of MADS1. Its function in MADS1 activation is abolished by TIFY3/JAZ1 which directly target MYC2 during spikelet development. This chain is Transcription factor MYC2, found in Oryza sativa subsp. japonica (Rice).